Reading from the N-terminus, the 656-residue chain is tRNA 5-methylaminomethyl-2-thiouridine biosynthesis bifunctional protein MnmC (656 aa).

The tRNA (mnm(5)s(2)U34)-methyltransferase stretch occupies residues 1–236 (MTDPLIPAVL…KRAMLVGHFA (236 aa)). Residues 260–656 (IGAGLAGCAV…LRALRQGAVS (397 aa)) form an FAD-dependent cmnm(5)s(2)U34 oxidoreductase region.

The protein in the N-terminal section; belongs to the methyltransferase superfamily. tRNA (mnm(5)s(2)U34)-methyltransferase family. In the C-terminal section; belongs to the DAO family. Requires FAD as cofactor.

The protein localises to the cytoplasm. The catalysed reaction is 5-aminomethyl-2-thiouridine(34) in tRNA + S-adenosyl-L-methionine = 5-methylaminomethyl-2-thiouridine(34) in tRNA + S-adenosyl-L-homocysteine + H(+). In terms of biological role, catalyzes the last two steps in the biosynthesis of 5-methylaminomethyl-2-thiouridine (mnm(5)s(2)U) at the wobble position (U34) in tRNA. Catalyzes the FAD-dependent demodification of cmnm(5)s(2)U34 to nm(5)s(2)U34, followed by the transfer of a methyl group from S-adenosyl-L-methionine to nm(5)s(2)U34, to form mnm(5)s(2)U34. The chain is tRNA 5-methylaminomethyl-2-thiouridine biosynthesis bifunctional protein MnmC from Paraburkholderia phytofirmans (strain DSM 17436 / LMG 22146 / PsJN) (Burkholderia phytofirmans).